Here is a 144-residue protein sequence, read N- to C-terminus: Granulocyte-macrophage colony-stimulating factor (144 aa).

Residues 1-17 form the signal peptide; that stretch reads MWLQNLLFLGTVVCSIS. Ser-22 carries O-linked (GalNAc...) serine glycosylation. O-linked (GalNAc...) threonine glycosylation is present at Thr-27. Asn-44 carries N-linked (GlcNAc...) asparagine glycosylation. Disulfide bonds link Cys-71–Cys-113 and Cys-105–Cys-138.

The protein belongs to the GM-CSF family. In terms of assembly, monomer. The signaling GM-CSF receptor complex is a dodecamer of two head-to-head hexamers of two alpha, two beta, and two ligand subunits.

It is found in the secreted. Its function is as follows. Cytokine that stimulates the growth and differentiation of hematopoietic precursor cells from various lineages, including granulocytes, macrophages, eosinophils and erythrocytes. This chain is Granulocyte-macrophage colony-stimulating factor (CSF2), found in Canis lupus familiaris (Dog).